We begin with the raw amino-acid sequence, 21 residues long: Peptide PGLa-R3 (21 aa).

Leu21 carries the leucine amide modification.

In terms of tissue distribution, expressed by the skin glands.

The protein localises to the secreted. Its function is as follows. Antimicrobial peptide. The protein is Peptide PGLa-R3 of Xenopus ruwenzoriensis (Uganda clawed frog).